Here is a 20-residue protein sequence, read N- to C-terminus: DnaJ homolog subfamily C member 1 (20 aa).

Residues 1–20 are Lumenal-facing; the sequence is WESGDLELFDLVEEVXLNFY. In terms of domain architecture, J spans 18 to 20; the sequence is NFY.

In terms of assembly, interacts (via SANT 2 domain) with SERPINA3; the interaction delays the formation of the covalent inhibitory complex SERPINA3-chymotrypsin, but does not alter the catalytic activity of SERPINA3. Interacts (via SANT 2 domain) with ITIH4 (via C-terminus); the interaction protects ITIH4 against in vitro cleavage by kallikrein. Interacts (via J domain) with HSPA5. Interacts (via cytosolic domain) with ribosomes.

It localises to the endoplasmic reticulum membrane. Its subcellular location is the nucleus membrane. The protein localises to the microsome membrane. The polypeptide is DnaJ homolog subfamily C member 1 (DNAJC1) (Canis lupus familiaris (Dog)).